Here is a 920-residue protein sequence, read N- to C-terminus: Valine--tRNA ligase (920 aa).

The 'HIGH' region signature appears at 40-50; sequence PNVTGTLHMGH. The short motif at 522–526 is the 'KMSKS' region element; it reads KMSKS. Residue lysine 525 participates in ATP binding. Coiled coils occupy residues 642 to 668 and 849 to 920; these read EWIRTRLQQTIKNAEEALSQYRFDLLA and AGVI…IESL.

The protein belongs to the class-I aminoacyl-tRNA synthetase family. ValS type 1 subfamily. In terms of assembly, monomer.

The protein resides in the cytoplasm. It catalyses the reaction tRNA(Val) + L-valine + ATP = L-valyl-tRNA(Val) + AMP + diphosphate. Catalyzes the attachment of valine to tRNA(Val). As ValRS can inadvertently accommodate and process structurally similar amino acids such as threonine, to avoid such errors, it has a 'posttransfer' editing activity that hydrolyzes mischarged Thr-tRNA(Val) in a tRNA-dependent manner. In Coxiella burnetii (strain RSA 493 / Nine Mile phase I), this protein is Valine--tRNA ligase.